Here is a 350-residue protein sequence, read N- to C-terminus: C5a anaphylatoxin chemotactic receptor 1 (350 aa).

Over 1-37 (MDSFNYTTPDYGHYDDKDTLDLNTPVDKTSNTLRVPD) the chain is Extracellular. Asn-5 is a glycosylation site (N-linked (GlcNAc...) asparagine). The interval 10–18 (DYGHYDDKD) is required for CHIPS binding. Sulfotyrosine is present on residues Tyr-11 and Tyr-14. Positions 21–30 (DLNTPVDKTS) are involved in C5a binding. Residues 38–64 (ILALVIFAVVFLVGVLGNALVVWVTAF) form a helical membrane-spanning segment. Residues 65–69 (EAKRT) are Cytoplasmic-facing. A helical transmembrane segment spans residues 70–93 (INAIWFLNLAVADFLSCLALPILF). Over 94–110 (TSIVQHHHWPFGGAACS) the chain is Extracellular. An intrachain disulfide couples Cys-109 to Cys-188. The helical transmembrane segment at 111 to 132 (ILPSLILLNMYASILLLATISA) threads the bilayer. The Cytoplasmic portion of the chain corresponds to 133 to 153 (DRFLLVFKPIWCQNFRGAGLA). A helical transmembrane segment spans residues 154–174 (WIACAVAWGLALLLTIPSFLY). At 175 to 200 (RVVREEYFPPKVLCGVDYSHDKRRER) the chain is on the extracellular side. Residues 201–226 (AVAIVRLVLGFLWPLLTLTICYTFIL) traverse the membrane as a helical segment. Over 227–242 (LRTWSRRATRSTKTLK) the chain is Cytoplasmic. A helical transmembrane segment spans residues 243 to 265 (VVVAVVASFFIFWLPYQVTGIMM). Topologically, residues 266–282 (SFLEPSSPTFLLLKKLD) are extracellular. The chain crosses the membrane as a helical span at residues 283-303 (SLCVSFAYINCCINPIIYVVA). Topologically, residues 304 to 350 (GQGFQGRLRKSLPSLLRNVLTEESVVRESKSFTRSTVDTMAQKTQAV) are cytoplasmic. A phosphoserine mark is found at Ser-314, Ser-317, Ser-327, Ser-332, Ser-334, and Ser-338.

The protein belongs to the G-protein coupled receptor 1 family. As to quaternary structure, homodimer. May also form higher-order oligomers. Interacts (when phosphorylated) with ARRB1 and ARRB2; the interaction is associated with internalization of C5aR. Interacts (via N-terminal domain) with S.aureus chemotaxis inhibitory protein (CHIPS); the interaction blocks the receptor and may thus inhibit the immune response. Sulfation plays a critical role in the association of C5aR with C5a, but no significant role in the ability of the receptor to transduce a signal and mobilize calcium in response to a small a small peptide agonist. Sulfation at Tyr-14 is important for CHIPS binding. In terms of processing, phosphorylated on serine residues in response to C5a binding, resulting in internalization of the receptor and short-term desensitization to the ligand. The key residues involved in this process are Ser-334 and Ser-338.

The protein resides in the cell membrane. It localises to the cytoplasmic vesicle. Receptor for the chemotactic and inflammatory peptide anaphylatoxin C5a. The ligand interacts with at least two sites on the receptor: a high-affinity site on the extracellular N-terminus, and a second site in the transmembrane region which activates downstream signaling events. Receptor activation stimulates chemotaxis, granule enzyme release, intracellular calcium release and superoxide anion production. The protein is C5a anaphylatoxin chemotactic receptor 1 (C5AR1) of Homo sapiens (Human).